The following is a 230-amino-acid chain: Cytidylate kinase (230 aa).

11-19 provides a ligand contact to ATP; that stretch reads GPAAAGKST.

The protein belongs to the cytidylate kinase family. Type 1 subfamily.

It localises to the cytoplasm. The catalysed reaction is CMP + ATP = CDP + ADP. It catalyses the reaction dCMP + ATP = dCDP + ADP. In Oceanobacillus iheyensis (strain DSM 14371 / CIP 107618 / JCM 11309 / KCTC 3954 / HTE831), this protein is Cytidylate kinase.